The sequence spans 146 residues: Large ribosomal subunit protein uL15 (146 aa).

The tract at residues 1-66 (MKLHELKPAP…LQRRMPKRGF (66 aa)) is disordered. Composition is skewed to gly residues over residues 21–31 (QGIGSGMGKTA) and 42–52 (SGGGVRPGFEG).

It belongs to the universal ribosomal protein uL15 family. Part of the 50S ribosomal subunit.

Its function is as follows. Binds to the 23S rRNA. The polypeptide is Large ribosomal subunit protein uL15 (Pelotomaculum thermopropionicum (strain DSM 13744 / JCM 10971 / SI)).